We begin with the raw amino-acid sequence, 838 residues long: MIFPILPVISSPEDKQSIDEFSLVGQVLFPIESVSPKKHFIHQFPHDLDIFVNAIDNATTDQIVELLNVGIKQVFVNEKQYHDAIEAGSPSSRFVVAVDVPSTELLTSEASFVTSKPFSESDLKKYNANENRVIYIESNFTQDGAIELAKNYVPVIPSTKLTVKREEENKISISAVFVSTLTTDRPDGLYTTLITTPSPSYTALGIVYSSKDSIIAAIEEKVGVYQSRKRRDELWYKGKTSGATQKLVKLSKDCDSDVIQFMVEPRTGYGFCHRETKFTCFGDDIADSPARGLPKLDSTLQDRLENAPEGSYTKRLFDDEKLLIAKLKEELDELIEAKSKEEIAWECADLVYFAMVWCIKHGVRLADIEKNLDVKSLKVSRRKGDAKPQYQEAPVNSSYKLEIVSVDDAAAVERAMTRPVQKTADIMKLVLPIIEKVKSDGDKALIELTSKFDGVKLDAPVLQAPFPADLMDISEEMKAAIDLSMQNIEKFHAAQLPKEKVMTVETSPGVYCSRFAKPIENVGLYVPGGTAVLPSTAMMLGVPAKVAGCKNIIVASPPSRATGKLTPEVVYVAHKLGAKCIVMAGGAQAVTAMAYGTESVLKCDKILGPGNQFVTAAKMYVQNDTQALCSIDMPAGPSEVLVIADSNADADFVASDLLSQAEHGVDSQVILIGVGLSDEKLNEFQAAVERQAKVLPRKDIVAKCLAHSYILLAKTYKEAFDLSNQYAPEHLILQIDDAPSYVPDSIENAGSVFVGALSPESCGDYSSGTNHTLPTYGYARQYSGVNTATFQKFITSQEVTEKGLQNIGKAVMELARVEGLEAHRRAVEIRMERMAETK.

The phosphoribosyl-AMP cyclohydrolase stretch occupies residues 1–271 (MIFPILPVIS…MVEPRTGYGF (271 aa)). Residues 272–360 (CHRETKFTCF…VYFAMVWCIK (89 aa)) are phosphoribosyl-ATP pyrophosphohydrolase. The interval 361-838 (HGVRLADIEK…IRMERMAETK (478 aa)) is histidinol dehydrogenase. Zn(2+) contacts are provided by Gln660 and His663. Catalysis depends on residues Glu729 and His730. Positions 764 and 823 each coordinate Zn(2+).

This sequence in the C-terminal section; belongs to the histidinol dehydrogenase family. It depends on Zn(2+) as a cofactor.

The enzyme catalyses 1-(5-phospho-beta-D-ribosyl)-5'-AMP + H2O = 1-(5-phospho-beta-D-ribosyl)-5-[(5-phospho-beta-D-ribosylamino)methylideneamino]imidazole-4-carboxamide. It carries out the reaction 1-(5-phospho-beta-D-ribosyl)-ATP + H2O = 1-(5-phospho-beta-D-ribosyl)-5'-AMP + diphosphate + H(+). The catalysed reaction is L-histidinol + 2 NAD(+) + H2O = L-histidine + 2 NADH + 3 H(+). It functions in the pathway amino-acid biosynthesis; L-histidine biosynthesis; L-histidine from 5-phospho-alpha-D-ribose 1-diphosphate: step 2/9. Its pathway is amino-acid biosynthesis; L-histidine biosynthesis; L-histidine from 5-phospho-alpha-D-ribose 1-diphosphate: step 3/9. It participates in amino-acid biosynthesis; L-histidine biosynthesis; L-histidine from 5-phospho-alpha-D-ribose 1-diphosphate: step 9/9. This Candida albicans (Yeast) protein is Histidine biosynthesis trifunctional protein (HIS4).